The primary structure comprises 144 residues: Small ribosomal subunit protein eS10A (144 aa).

The tract at residues 90–144 (THKRQVRPTAPRAGRPEPRERASADAGYRRAEKKDEGAAPSGFAPSFRGGFGRPQ) is disordered. Over residues 103–126 (GRPEPRERASADAGYRRAEKKDEG) the composition is skewed to basic and acidic residues.

It belongs to the eukaryotic ribosomal protein eS10 family. Component of the small ribosomal subunit (SSU). Mature yeast ribosomes consist of a small (40S) and a large (60S) subunit. The 40S small subunit contains 1 molecule of ribosomal RNA (18S rRNA) and at least 33 different proteins. The large 60S subunit contains 3 rRNA molecules (25S, 5.8S and 5S rRNA) and at least 46 different proteins. eS10 interacts with GCN1 (via middle region); this interaction is direct and promotes GCN2 kinase activity.

The protein localises to the cytoplasm. Its function is as follows. Component of the ribosome, a large ribonucleoprotein complex responsible for the synthesis of proteins in the cell. The small ribosomal subunit (SSU) binds messenger RNAs (mRNAs) and translates the encoded message by selecting cognate aminoacyl-transfer RNA (tRNA) molecules. The large subunit (LSU) contains the ribosomal catalytic site termed the peptidyl transferase center (PTC), which catalyzes the formation of peptide bonds, thereby polymerizing the amino acids delivered by tRNAs into a polypeptide chain. The nascent polypeptides leave the ribosome through a tunnel in the LSU and interact with protein factors that function in enzymatic processing, targeting, and the membrane insertion of nascent chains at the exit of the ribosomal tunnel. eS10 plays a role as a positive regulator of the GCN2 kinase activity by stimulating GCN1-mediated GCN2 activation. The polypeptide is Small ribosomal subunit protein eS10A (rps1001) (Schizosaccharomyces pombe (strain 972 / ATCC 24843) (Fission yeast)).